Reading from the N-terminus, the 148-residue chain is 3-dehydroquinate dehydratase (148 aa).

Tyr22 serves as the catalytic Proton acceptor. Residues Asn73, His79, and Asp86 each coordinate substrate. The active-site Proton donor is the His99. Substrate-binding positions include Leu100 to Ser101 and Arg110.

It belongs to the type-II 3-dehydroquinase family. Homododecamer.

It carries out the reaction 3-dehydroquinate = 3-dehydroshikimate + H2O. The protein operates within metabolic intermediate biosynthesis; chorismate biosynthesis; chorismate from D-erythrose 4-phosphate and phosphoenolpyruvate: step 3/7. Functionally, catalyzes a trans-dehydration via an enolate intermediate. This is 3-dehydroquinate dehydratase from Prochlorococcus marinus (strain MIT 9211).